We begin with the raw amino-acid sequence, 76 residues long: Conotoxin Lt6.1 (76 aa).

The N-terminal stretch at 1 to 22 (MKLTCVLIIAVLFLMDNQLITA) is a signal peptide. Positions 23 to 48 (DYPRDEQVYRAVRLRDAMQKSKGSGS) are excised as a propeptide. 3 disulfides stabilise this stretch: C49–C62, C56–C67, and C61–C75.

Belongs to the conotoxin O1 superfamily. Expressed by the venom duct.

The protein resides in the secreted. The chain is Conotoxin Lt6.1 from Conus litteratus (Lettered cone).